The primary structure comprises 274 residues: ATP synthase subunit delta (274 aa).

It belongs to the ATPase delta chain family. As to quaternary structure, F-type ATPases have 2 components, F(1) - the catalytic core - and F(0) - the membrane proton channel. F(1) has five subunits: alpha(3), beta(3), gamma(1), delta(1), epsilon(1). F(0) has three main subunits: a(1), b(2) and c(10-14). The alpha and beta chains form an alternating ring which encloses part of the gamma chain. F(1) is attached to F(0) by a central stalk formed by the gamma and epsilon chains, while a peripheral stalk is formed by the delta and b chains.

The protein resides in the cell membrane. Functionally, f(1)F(0) ATP synthase produces ATP from ADP in the presence of a proton or sodium gradient. F-type ATPases consist of two structural domains, F(1) containing the extramembraneous catalytic core and F(0) containing the membrane proton channel, linked together by a central stalk and a peripheral stalk. During catalysis, ATP synthesis in the catalytic domain of F(1) is coupled via a rotary mechanism of the central stalk subunits to proton translocation. This protein is part of the stalk that links CF(0) to CF(1). It either transmits conformational changes from CF(0) to CF(1) or is implicated in proton conduction. In Salinispora arenicola (strain CNS-205), this protein is ATP synthase subunit delta.